Consider the following 125-residue polypeptide: Small ribosomal subunit protein uS12m (125 aa).

Residues 1-51 (MPTKNQLIRHGREEKRRTDRTRALDQCPQKQGVCPRVSTRTPKKPNSAPRK) form a disordered region. The span at 10-23 (HGREEKRRTDRTRA) shows a compositional bias: basic and acidic residues.

The protein belongs to the universal ribosomal protein uS12 family.

It is found in the mitochondrion. Its function is as follows. Protein S12 is involved in the translation initiation step. The polypeptide is Small ribosomal subunit protein uS12m (RPS12) (Nicotiana sylvestris (Wood tobacco)).